The primary structure comprises 833 residues: Phosphatidylinositol-3-phosphatase myotubularin-2 (833 aa).

The GRAM domain occupies 42–109 (GSYSNLDCLL…VAIEKFNKLA (68 aa)). The 467-residue stretch at 181–647 (TNPKERLLNE…LAPTLWPQFH (467 aa)) folds into the Myotubularin phosphatase domain. Residues 329-332 (NGAK), 354-355 (NI), 440-446 (CSDGWDR), and R486 contribute to the substrate site. C440 (phosphocysteine intermediate) is an active-site residue. Positions 503 to 530 (QSSSARSFPSSPVRQSPGSAAAQSSSSS) are disordered. Positions 504-530 (SSSARSFPSSPVRQSPGSAAAQSSSSS) are enriched in low complexity. A coiled-coil region spans residues 660–717 (ETEDQCRAMTVKYSEMKKEKEEAERKVDELSSAMESLNEELLNERDISRAARESAKRA). The interval 753–772 (KCSHSIPQKQSEDNTTDVSE) is disordered.

Belongs to the protein-tyrosine phosphatase family. Non-receptor class myotubularin subfamily. In terms of tissue distribution, mostly expressed in flowers and roots, and, to a lower extent, in siliques and leaves.

It is found in the cytoplasm. It catalyses the reaction a 1,2-diacyl-sn-glycero-3-phospho-(1D-myo-inositol-3-phosphate) + H2O = a 1,2-diacyl-sn-glycero-3-phospho-(1D-myo-inositol) + phosphate. It carries out the reaction a 1,2-diacyl-sn-glycero-3-phospho-(1D-myo-inositol-3,5-bisphosphate) + H2O = a 1,2-diacyl-sn-glycero-3-phospho-(1D-myo-inositol-5-phosphate) + phosphate. In terms of biological role, phosphatase with phosphoinositide 3'-phosphatase activity that can use phosphatidylinositol-3-phosphate (PtdIns3P) and phosphatidylinositol-3,5-diphosphate (PtdIns3,5P(2)) as substrates and produces phosphatidylinositol-5-phosphate (PtdIns5P); participates in pathway(s) that transfer gene regulatory signals to the nucleus. The sequence is that of Phosphatidylinositol-3-phosphatase myotubularin-2 (MTM2) from Arabidopsis thaliana (Mouse-ear cress).